A 141-amino-acid polypeptide reads, in one-letter code: MLMPRRMKYRKQQRGRLKGATKGGDYVAFGDFGLVALEPAWITAQQIEAARVAMVRHFRRGGKIFIRIFPDKPYTKKPLEVRMGKGKGNVEGYVAVVKPGRVMFEVAGVTEEQAMEALRIAGHKLPIKTKIVRRDAYDEAQ.

This sequence belongs to the universal ribosomal protein uL16 family. In terms of assembly, part of the 50S ribosomal subunit.

Binds 23S rRNA and is also seen to make contacts with the A and possibly P site tRNAs. This chain is Large ribosomal subunit protein uL16, found in Thermus thermophilus (strain ATCC BAA-163 / DSM 7039 / HB27).